Consider the following 143-residue polypeptide: uncharacterized protein (143 aa).

Positions 35–59 (ITKDRGDRDDGRYGEPRIQRKPGQL) are disordered. A compositionally biased stretch (basic and acidic residues) spans 36–52 (TKDRGDRDDGRYGEPRI).

This is an uncharacterized protein from Streptomyces fradiae (Streptomyces roseoflavus).